Reading from the N-terminus, the 333-residue chain is DNA-directed RNA polymerase subunit alpha (333 aa).

The alpha N-terminal domain (alpha-NTD) stretch occupies residues Met1–Glu233. The tract at residues Lys266–Pro333 is alpha C-terminal domain (alpha-CTD).

Belongs to the RNA polymerase alpha chain family. As to quaternary structure, in plastids the minimal PEP RNA polymerase catalytic core is composed of four subunits: alpha, beta, beta', and beta''. When a (nuclear-encoded) sigma factor is associated with the core the holoenzyme is formed, which can initiate transcription.

The protein localises to the plastid. It localises to the chloroplast. The catalysed reaction is RNA(n) + a ribonucleoside 5'-triphosphate = RNA(n+1) + diphosphate. In terms of biological role, DNA-dependent RNA polymerase catalyzes the transcription of DNA into RNA using the four ribonucleoside triphosphates as substrates. This Lotus japonicus (Lotus corniculatus var. japonicus) protein is DNA-directed RNA polymerase subunit alpha.